The following is a 155-amino-acid chain: Small ribosomal subunit protein uS9 (155 aa).

It belongs to the universal ribosomal protein uS9 family.

The sequence is that of Small ribosomal subunit protein uS9 from Rhizobium etli (strain ATCC 51251 / DSM 11541 / JCM 21823 / NBRC 15573 / CFN 42).